The following is a 289-amino-acid chain: Testis-expressed protein 26 (289 aa).

The disordered stretch occupies residues 1-26; that stretch reads MEQPGPRAPDPSLCHHNLQPTDDPNW. Mn stretches follow at residues 30 to 42, 69 to 83, 144 to 157, 179 to 193, and 233 to 247; these read ATTMRTAFTPKTG, QTQYSDEYTWKSHSK, ISLTKRDFVDRSKA, DTEFRRNYQIPAKIP, and QTTYQSDYDKTYPDF.

This is Testis-expressed protein 26 (TEX26) from Homo sapiens (Human).